The chain runs to 108 residues: UPF0145 protein LCABL_07110 (108 aa).

It belongs to the UPF0145 family.

The polypeptide is UPF0145 protein LCABL_07110 (Lacticaseibacillus casei (strain BL23) (Lactobacillus casei)).